Reading from the N-terminus, the 145-residue chain is UPF0179 protein MmarC7_0952 (145 aa).

Belongs to the UPF0179 family.

This chain is UPF0179 protein MmarC7_0952, found in Methanococcus maripaludis (strain C7 / ATCC BAA-1331).